The primary structure comprises 458 residues: Morphogenetic regulator of filamentous growth protein 1 (458 aa).

The segment at K401–F458 is disordered. Residues S417–N445 are compositionally biased toward polar residues. The span at D446–F458 shows a compositional bias: basic and acidic residues.

The protein belongs to the MFG1 family. In terms of assembly, interacts with FLO8 and MSS11, both morphogenetic transcription factors binding directly to the FLO11 promoter.

It localises to the nucleus. Its function is as follows. Transcriptional regulator with a general role in all morphogenetically distinct forms of filamentous growth, namely haploid invasive growth, biofilm formation, and diploid pseudohyphal growth. May control FLO11 gene expression as part of a promoter-bound complex with FLO8 and MSS1. The protein is Morphogenetic regulator of filamentous growth protein 1 (MFG1) of Saccharomyces cerevisiae (strain ATCC 204508 / S288c) (Baker's yeast).